The chain runs to 351 residues: UDP-N-acetylglucosamine--N-acetylmuramyl-(pentapeptide) pyrophosphoryl-undecaprenol N-acetylglucosamine transferase (351 aa).

UDP-N-acetyl-alpha-D-glucosamine-binding positions include 12–14 (TGG), Asn-124, Arg-160, Ser-188, Ile-239, 258–263 (ALTVCE), and Gln-283.

Belongs to the glycosyltransferase 28 family. MurG subfamily.

It is found in the cell inner membrane. It catalyses the reaction di-trans,octa-cis-undecaprenyl diphospho-N-acetyl-alpha-D-muramoyl-L-alanyl-D-glutamyl-meso-2,6-diaminopimeloyl-D-alanyl-D-alanine + UDP-N-acetyl-alpha-D-glucosamine = di-trans,octa-cis-undecaprenyl diphospho-[N-acetyl-alpha-D-glucosaminyl-(1-&gt;4)]-N-acetyl-alpha-D-muramoyl-L-alanyl-D-glutamyl-meso-2,6-diaminopimeloyl-D-alanyl-D-alanine + UDP + H(+). Its pathway is cell wall biogenesis; peptidoglycan biosynthesis. In terms of biological role, cell wall formation. Catalyzes the transfer of a GlcNAc subunit on undecaprenyl-pyrophosphoryl-MurNAc-pentapeptide (lipid intermediate I) to form undecaprenyl-pyrophosphoryl-MurNAc-(pentapeptide)GlcNAc (lipid intermediate II). The chain is UDP-N-acetylglucosamine--N-acetylmuramyl-(pentapeptide) pyrophosphoryl-undecaprenol N-acetylglucosamine transferase from Glaesserella parasuis serovar 5 (strain SH0165) (Haemophilus parasuis).